A 594-amino-acid chain; its full sequence is 3-hydroxy-3-methylglutaryl coenzyme A reductase 2-A (594 aa).

Residues Met1–Ala32 form a disordered region. The Lumenal portion of the chain corresponds to Met1 to Pro37. A helical membrane pass occupies residues Leu38–Leu58. The Cytoplasmic segment spans residues Leu59–Ala81. The chain crosses the membrane as a helical span at residues Ala82–Val102. The Lumenal segment spans residues Arg103–Arg549. An N-linked (GlcNAc...) asparagine glycan is attached at Asn261. Glu273 serves as the catalytic Charge relay system. An N-linked (GlcNAc...) asparagine glycan is attached at Asn337. Residues Lys405 and Asp481 each act as charge relay system in the active site. The chain crosses the membrane as a helical span at residues Leu550 to Leu570. Residues Ala571–Ser594 are Cytoplasmic-facing. His579 acts as the Proton donor in catalysis.

It belongs to the HMG-CoA reductase family. Mostly expressed in the petioles of seedlings, seedlings and roots, and, to a lower extent, in seeds, leaves, stems and flowers.

Its subcellular location is the endoplasmic reticulum membrane. The protein resides in the plastid. The protein localises to the chloroplast membrane. It is found in the peroxisome membrane. It carries out the reaction (R)-mevalonate + 2 NADP(+) + CoA = (3S)-3-hydroxy-3-methylglutaryl-CoA + 2 NADPH + 2 H(+). The protein operates within metabolic intermediate biosynthesis; (R)-mevalonate biosynthesis; (R)-mevalonate from acetyl-CoA: step 3/3. With respect to regulation, competitive inhibition by mevinolin (Mev) is leading to a significant reduction of total ginsenoside in adventitious roots. Triggered by darkness. Functionally, catalyzes the synthesis of mevalonate, the specific precursor of all isoprenoid compounds present in plants. Component of the triterpene saponins (e.g. ginsenosides or panaxosides) and phytosterols biosynthetic pathways. This is 3-hydroxy-3-methylglutaryl coenzyme A reductase 2-A from Panax ginseng (Korean ginseng).